Consider the following 334-residue polypeptide: Tyrosine-protein kinase SRK3 (334 aa).

The 42-residue stretch at 1–42 (IRTLDDGGFYMANRISFPTLQNLVSHYMMDADGLAQRLSRPC) folds into the SH2 domain. One can recognise a Protein kinase domain in the interval 66–321 (IQLQRKLGQG…LKNLLEDYYV (256 aa)). ATP-binding positions include 72–80 (LGQGNFGEV) and Lys-94. Asp-186 serves as the catalytic Proton acceptor.

Belongs to the protein kinase superfamily. Tyr protein kinase family.

Its subcellular location is the cytoplasm. It catalyses the reaction L-tyrosyl-[protein] + ATP = O-phospho-L-tyrosyl-[protein] + ADP + H(+). In Spongilla lacustris (Freshwater sponge), this protein is Tyrosine-protein kinase SRK3 (SRK3).